A 291-amino-acid polypeptide reads, in one-letter code: Aliphatic sulfonates import ATP-binding protein SsuB 2 (291 aa).

One can recognise an ABC transporter domain in the interval leucine 26–isoleucine 247. Glycine 58–serine 65 is a binding site for ATP. A disordered region spans residues proline 264–leucine 291. Residues alanine 281–leucine 291 are compositionally biased toward polar residues.

Belongs to the ABC transporter superfamily. Aliphatic sulfonates importer (TC 3.A.1.17.2) family. In terms of assembly, the complex is composed of two ATP-binding proteins (SsuB), two transmembrane proteins (SsuC) and a solute-binding protein (SsuA).

The protein localises to the cell inner membrane. It catalyses the reaction ATP + H2O + aliphatic sulfonate-[sulfonate-binding protein]Side 1 = ADP + phosphate + aliphatic sulfonateSide 2 + [sulfonate-binding protein]Side 1.. Part of the ABC transporter complex SsuABC involved in aliphatic sulfonates import. Responsible for energy coupling to the transport system. In Xanthomonas axonopodis pv. citri (strain 306), this protein is Aliphatic sulfonates import ATP-binding protein SsuB 2.